A 267-amino-acid polypeptide reads, in one-letter code: Proteasome subunit alpha (267 aa).

The segment at 231–267 (ETLLQERDSKESAESEEPKESEEGKKTGKKSDADSSD) is disordered. Residues 234-267 (LQERDSKESAESEEPKESEEGKKTGKKSDADSSD) are compositionally biased toward basic and acidic residues.

The protein belongs to the peptidase T1A family. In terms of assembly, the 20S proteasome core is composed of 14 alpha and 14 beta subunits that assemble into four stacked heptameric rings, resulting in a barrel-shaped structure. The two inner rings, each composed of seven catalytic beta subunits, are sandwiched by two outer rings, each composed of seven alpha subunits. The catalytic chamber with the active sites is on the inside of the barrel. Has a gated structure, the ends of the cylinder being occluded by the N-termini of the alpha-subunits. Is capped by the proteasome-associated ATPase, ARC.

Its subcellular location is the cytoplasm. It functions in the pathway protein degradation; proteasomal Pup-dependent pathway. The formation of the proteasomal ATPase ARC-20S proteasome complex, likely via the docking of the C-termini of ARC into the intersubunit pockets in the alpha-rings, may trigger opening of the gate for substrate entry. Interconversion between the open-gate and close-gate conformations leads to a dynamic regulation of the 20S proteasome proteolysis activity. Functionally, component of the proteasome core, a large protease complex with broad specificity involved in protein degradation. The sequence is that of Proteasome subunit alpha from Mycobacterium marinum (strain ATCC BAA-535 / M).